Reading from the N-terminus, the 286-residue chain is Energy-coupling factor transporter ATP-binding protein EcfA2 (286 aa).

Residues 3–244 enclose the ABC transporter domain; it reads IKVENVSFIY…AERLEKIGLS (242 aa). 40–47 is an ATP binding site; that stretch reads GHTGSGKS.

The protein belongs to the ABC transporter superfamily. Energy-coupling factor EcfA family. As to quaternary structure, forms a stable energy-coupling factor (ECF) transporter complex composed of 2 membrane-embedded substrate-binding proteins (S component), 2 ATP-binding proteins (A component) and 2 transmembrane proteins (T component).

The protein localises to the cell membrane. Functionally, ATP-binding (A) component of a common energy-coupling factor (ECF) ABC-transporter complex. Unlike classic ABC transporters this ECF transporter provides the energy necessary to transport a number of different substrates. The polypeptide is Energy-coupling factor transporter ATP-binding protein EcfA2 (Caldanaerobacter subterraneus subsp. tengcongensis (strain DSM 15242 / JCM 11007 / NBRC 100824 / MB4) (Thermoanaerobacter tengcongensis)).